Here is a 327-residue protein sequence, read N- to C-terminus: Gibberellin 2-beta-dioxygenase 1 (327 aa).

A Fe2OG dioxygenase domain is found at Q171–P276. 3 residues coordinate Fe cation: H200, D202, and H257. R267 is an active-site residue.

The protein belongs to the iron/ascorbate-dependent oxidoreductase family. GA2OX subfamily. It depends on Fe cation as a cofactor. As to expression, predominantly expressed in roots, flowers, young fruits and seeds.

The enzyme catalyses gibberellin A1 + 2-oxoglutarate + O2 = gibberellin A8 + succinate + CO2. Its pathway is plant hormone biosynthesis; gibberellin biosynthesis. Catalyzes the 2-beta-hydroxylation of several biologically active gibberellins, leading to the homeostatic regulation of their endogenous level. Catabolism of gibberellins (GAs) plays a central role in plant development. Converts GA9/GA20 to GA51/GA29 and GA4/GA1 to GA34/GA8. The protein is Gibberellin 2-beta-dioxygenase 1 (GA2OX1) of Pisum sativum (Garden pea).